The chain runs to 605 residues: Probable potassium transport system protein Kup 3 (605 aa).

The next 12 membrane-spanning stretches (helical) occupy residues 16-36 (ALGL…TVIF), 49-69 (ILSL…AWLA), 97-117 (VAFA…DAVI), 138-158 (GLST…LFSV), 170-190 (FGPI…VSAF), 212-232 (GLAG…GEAL), 247-267 (AWHF…VFAI), 287-307 (LYIP…QAII), 339-359 (IYLG…MLVF), 368-388 (AYGM…IIVF), 397-417 (ALVA…TFSK), and 418-438 (LPHG…TIII).

This sequence belongs to the HAK/KUP transporter (TC 2.A.72) family.

The protein localises to the cell inner membrane. It carries out the reaction K(+)(in) + H(+)(in) = K(+)(out) + H(+)(out). Transport of potassium into the cell. Likely operates as a K(+):H(+) symporter. In Geobacter sulfurreducens (strain ATCC 51573 / DSM 12127 / PCA), this protein is Probable potassium transport system protein Kup 3.